A 492-amino-acid chain; its full sequence is Catalase isozyme 2 (492 aa).

The tract at residues 1-32 (MDPYKFRPSSSNDTPFWTTNAGDPVSNNNSSM) is disordered. Over residues 8-32 (PSSSNDTPFWTTNAGDPVSNNNSSM) the composition is skewed to polar residues. Residues histidine 65 and asparagine 138 contribute to the active site. Residue tyrosine 348 coordinates heme.

It belongs to the catalase family. As to quaternary structure, homotetramer. Requires heme as cofactor. Abundant in hypocotyls and roots. Low levels are seen in the endosperms and cotyledons.

It localises to the peroxisome. The protein resides in the glyoxysome. The enzyme catalyses 2 H2O2 = O2 + 2 H2O. Functionally, occurs in almost all aerobically respiring organisms and serves to protect cells from the toxic effects of hydrogen peroxide. The chain is Catalase isozyme 2 (CAT2) from Ricinus communis (Castor bean).